An 89-amino-acid polypeptide reads, in one-letter code: Acylphosphatase (89 aa).

In terms of domain architecture, Acylphosphatase-like spans 4–89 (SRRFLVSGTV…EQPPEGFRVL (86 aa)). Catalysis depends on residues arginine 19 and asparagine 37.

The protein belongs to the acylphosphatase family.

The catalysed reaction is an acyl phosphate + H2O = a carboxylate + phosphate + H(+). This is Acylphosphatase (acyP) from Alkalilimnicola ehrlichii (strain ATCC BAA-1101 / DSM 17681 / MLHE-1).